Consider the following 316-residue polypeptide: Phospho-N-acetylmuramoyl-pentapeptide-transferase (316 aa).

A run of 10 helical transmembrane segments spans residues 5-25 (IIFA…FFIP), 52-72 (TMGG…FSPW), 76-96 (LFIL…DDFL), 116-136 (FLLA…EIIV), 145-165 (LANF…NSVN), 172-192 (GLAA…ALFL), 195-212 (VTYG…LGFL), 221-241 (VFMG…VALL), 244-264 (LPLI…SVIL), and 296-316 (VVYS…YSLS).

Belongs to the glycosyltransferase 4 family. MraY subfamily. It depends on Mg(2+) as a cofactor.

The protein resides in the cell membrane. The catalysed reaction is UDP-N-acetyl-alpha-D-muramoyl-L-alanyl-gamma-D-glutamyl-meso-2,6-diaminopimeloyl-D-alanyl-D-alanine + di-trans,octa-cis-undecaprenyl phosphate = di-trans,octa-cis-undecaprenyl diphospho-N-acetyl-alpha-D-muramoyl-L-alanyl-D-glutamyl-meso-2,6-diaminopimeloyl-D-alanyl-D-alanine + UMP. It participates in cell wall biogenesis; peptidoglycan biosynthesis. Catalyzes the initial step of the lipid cycle reactions in the biosynthesis of the cell wall peptidoglycan: transfers peptidoglycan precursor phospho-MurNAc-pentapeptide from UDP-MurNAc-pentapeptide onto the lipid carrier undecaprenyl phosphate, yielding undecaprenyl-pyrophosphoryl-MurNAc-pentapeptide, known as lipid I. The protein is Phospho-N-acetylmuramoyl-pentapeptide-transferase of Caldanaerobacter subterraneus subsp. tengcongensis (strain DSM 15242 / JCM 11007 / NBRC 100824 / MB4) (Thermoanaerobacter tengcongensis).